The sequence spans 208 residues: Large ribosomal subunit protein uL4 (208 aa).

The interval 45-83 is disordered; that stretch reads RQGTHKSKTRAEVRGGGRKPYRQKGTGNARQGSTRSPLM. The span at 69-80 shows a compositional bias: polar residues; it reads GTGNARQGSTRS.

This sequence belongs to the universal ribosomal protein uL4 family. Part of the 50S ribosomal subunit.

One of the primary rRNA binding proteins, this protein initially binds near the 5'-end of the 23S rRNA. It is important during the early stages of 50S assembly. It makes multiple contacts with different domains of the 23S rRNA in the assembled 50S subunit and ribosome. Functionally, forms part of the polypeptide exit tunnel. In Chlorobium luteolum (strain DSM 273 / BCRC 81028 / 2530) (Pelodictyon luteolum), this protein is Large ribosomal subunit protein uL4.